Consider the following 301-residue polypeptide: Homoserine O-acetyltransferase (301 aa).

The active-site Acyl-thioester intermediate is Cys142. Residues Lys163 and Ser192 each coordinate substrate. The Proton acceptor role is filled by His235. Residue Glu237 is part of the active site. Arg249 lines the substrate pocket.

This sequence belongs to the MetA family.

It localises to the cytoplasm. It carries out the reaction L-homoserine + acetyl-CoA = O-acetyl-L-homoserine + CoA. It functions in the pathway amino-acid biosynthesis; L-methionine biosynthesis via de novo pathway; O-acetyl-L-homoserine from L-homoserine: step 1/1. Its function is as follows. Transfers an acetyl group from acetyl-CoA to L-homoserine, forming acetyl-L-homoserine. In Bacillus cereus (strain 03BB102), this protein is Homoserine O-acetyltransferase.